Consider the following 138-residue polypeptide: ATP synthase subunit g, mitochondrial (138 aa).

This sequence belongs to the ATPase g subunit family. As to quaternary structure, F-type ATP synthases have 2 components, the catalytic core F(1) and the membrane-embedded component F(0), linked together by a central stalk and a peripheral stalk. The central stalk, also called rotor shaft, is often seen as part of F(1). The peripheral stalk is seen as part of F(0). F(0) contains the membrane channel next to the rotor. F-type ATP synthases form dimers but each monomer functions independently in ATP generation. The dimer consists of 17 different polypeptides: ATP1 (subunit alpha, 3 molecules per monomer, part of F(1)), ATP2 (subunit beta, 3 copies per monomer, part of F(1)), ATP3 (subunit gamma, part of the central stalk), ATP4 (subunit b, part of the peripheral stalk), ATP5/OSCP (subunit 5/OSCP, part of the peripheral stalk), ATP6 (subunit a, part of the peripheral stalk), ATP7 (subunit d, part of the peripheral stalk), ATP8 (subunit 8, part of the peripheral stalk), OLI1 (subunit c, part of the rotor, 10 molecules per monomer), ATP14 (subunit h, part of the peripheral stalk), ATP15 (subunit epsilon, part of the central stalk), ATP16 (subunit delta, part of the central stalk), ATP17 (subunit f, part of the peripheral stalk), ATP18 (subunit i/j, part of the peripheral stalk), ATP19 (subunit k, dimer-specific, at interface between monomers), ATP20 (subunit g, at interface between monomers), TIM11 (subunit e, at interface between monomers).

The protein localises to the mitochondrion inner membrane. Mitochondrial membrane ATP synthase (F(1)F(0) ATP synthase or Complex V) produces ATP from ADP in the presence of a proton gradient across the membrane which is generated by electron transport complexes of the respiratory chain. F-type ATP synthases consist of two structural domains, F(1) - containing the extramembraneous catalytic core, and F(0) - containing the membrane proton channel, linked together by a central stalk and a peripheral stalk. During catalysis, ATP synthesis in the catalytic domain of F(1) is coupled via a rotary mechanism of the central stalk subunits to proton translocation. Part of the complex F(0) domain. Minor subunit located with subunit a/ATP6 in the membrane. Together with subunit e/TIM11, probably contributes to membrane curvature at the site of the ATP synthase dimer, ultimately contributing to formation of cristae. In Yarrowia lipolytica (strain CLIB 122 / E 150) (Yeast), this protein is ATP synthase subunit g, mitochondrial.